The chain runs to 145 residues: D-aminoacyl-tRNA deacylase (145 aa).

A Gly-cisPro motif, important for rejection of L-amino acids motif is present at residues 137–138; it reads GP.

It belongs to the DTD family. In terms of assembly, homodimer.

The protein resides in the cytoplasm. It catalyses the reaction glycyl-tRNA(Ala) + H2O = tRNA(Ala) + glycine + H(+). The catalysed reaction is a D-aminoacyl-tRNA + H2O = a tRNA + a D-alpha-amino acid + H(+). Functionally, an aminoacyl-tRNA editing enzyme that deacylates mischarged D-aminoacyl-tRNAs. Also deacylates mischarged glycyl-tRNA(Ala), protecting cells against glycine mischarging by AlaRS. Acts via tRNA-based rather than protein-based catalysis; rejects L-amino acids rather than detecting D-amino acids in the active site. By recycling D-aminoacyl-tRNA to D-amino acids and free tRNA molecules, this enzyme counteracts the toxicity associated with the formation of D-aminoacyl-tRNA entities in vivo and helps enforce protein L-homochirality. This is D-aminoacyl-tRNA deacylase from Pseudomonas putida (strain W619).